The sequence spans 738 residues: Flowering time control protein FCA (738 aa).

The segment at 1 to 118 (MHRGGDRSTD…RGDHSDHDNR (118 aa)) is disordered. 2 stretches are compositionally biased toward gly residues: residues 52-70 (RGGG…GGGR) and 81-98 (SGGG…GEPG). The segment covering 109–118 (RGDHSDHDNR) has biased composition (basic and acidic residues). 2 RRM domains span residues 122-203 (VKLF…YADG) and 213-293 (HKLF…FADP). Disordered regions lie at residues 292-414 (DPKR…GHHL) and 566-594 (QQSN…AIIP). Gly residues predominate over residues 301–311 (SRGGPAFGGPG). Over residues 342–358 (HPSSPRSAPHQFNNFGS) the composition is skewed to polar residues. Residues 368–377 (TVTSTTDTAT) are compositionally biased toward low complexity. 2 stretches are compositionally biased toward polar residues: residues 383–401 (FSGN…SSHM) and 575–594 (PTQG…AIIP). In terms of domain architecture, WW spans 609–642 (VPLTCNWTEHTSPEGFKYYYNSITRESKWDKPEE). The disordered stretch occupies residues 670 to 738 (MQQLQSPPQA…QSAQERAWKS (69 aa)). The segment covering 683–706 (PAMQPVQQIPQAQQGQQQMQMKQQ) has biased composition (low complexity). The span at 723–732 (RIQQGIQSAQ) shows a compositional bias: polar residues.

Interacts with FY. Binds to SF1, FIK, RPRD1B, Os09g0509000/LOC_Os09g33480 and MADS8. Mostly expressed in young flowers (panicles) and stems, and also present in young seedlings leaves and roots.

The protein resides in the nucleus. Functionally, plays a major role in the promotion of the transition of the vegetative meristem to reproductive development. Required for RNA-mediated chromatin silencing of a range of loci in the genome. Cotranscriptionally recognizes aberrant RNA and marks it for silencing. Controls alternative cleavage and polyadenylation on pre-mRNAs and antisense RNAs. Regulates flowering time, seed size and cell volume, probably via the modulation of cell size. The chain is Flowering time control protein FCA from Oryza sativa subsp. japonica (Rice).